A 150-amino-acid chain; its full sequence is 6,7-dimethyl-8-ribityllumazine synthase (150 aa).

5-amino-6-(D-ribitylamino)uracil is bound by residues F11, 43–45, and 67–69; these read VYD and AVI. 72-73 is a (2S)-2-hydroxy-3-oxobutyl phosphate binding site; it reads AT. H75 (proton donor) is an active-site residue. L100 provides a ligand contact to 5-amino-6-(D-ribitylamino)uracil. (2S)-2-hydroxy-3-oxobutyl phosphate is bound at residue R115.

Belongs to the DMRL synthase family.

It carries out the reaction (2S)-2-hydroxy-3-oxobutyl phosphate + 5-amino-6-(D-ribitylamino)uracil = 6,7-dimethyl-8-(1-D-ribityl)lumazine + phosphate + 2 H2O + H(+). It participates in cofactor biosynthesis; riboflavin biosynthesis; riboflavin from 2-hydroxy-3-oxobutyl phosphate and 5-amino-6-(D-ribitylamino)uracil: step 1/2. Functionally, catalyzes the formation of 6,7-dimethyl-8-ribityllumazine by condensation of 5-amino-6-(D-ribitylamino)uracil with 3,4-dihydroxy-2-butanone 4-phosphate. This is the penultimate step in the biosynthesis of riboflavin. The polypeptide is 6,7-dimethyl-8-ribityllumazine synthase (Pyrobaculum arsenaticum (strain DSM 13514 / JCM 11321 / PZ6)).